A 99-amino-acid chain; its full sequence is Protein Frey (99 aa).

The chain crosses the membrane as a helical span at residues 13–29 (AGLSLFALYLVLAAALL). A disordered region spans residues 64-90 (RPKHPWPRGPRPLLSRAQQRKRDGPDM).

As to quaternary structure, interacts with SPPL2C (via active sites); the interaction stabilizes FREY1 protein and inhibits SPPL2C proteolytic activity. Interacts with IZUMO1; the interaction retains IZUMO1 at the endoplasmic reticulum membrane and coordinates IZUMO1 complex assembly.

It localises to the endoplasmic reticulum membrane. Key regulator for male fertility expressed transiently in round spermatids where it recruits IZUMO1 at the endoplasmic reticulum (ER) membrane and coordinates the oolemmal binding multimeric complex (IZUMO1 complex) assembly. Upon complete assembly of the IZUMO1 complex, its ER retention is released, facilitating IZUMO1 complex export to the acrosome. Through the interaction with SPPL2C, inhibits its intramembrane protease activity directly accessing the catalytic center of an I-CLiP. This is Protein Frey (FREY1) from Bos taurus (Bovine).